The chain runs to 888 residues: 3-hydroxy-3-methylglutaryl-coenzyme A reductase (888 aa).

Topologically, residues M1–H9 are cytoplasmic. A helical membrane pass occupies residues G10–G39. Residues N40 to D56 lie on the Lumenal side of the membrane. A helical membrane pass occupies residues V57 to F78. The SSD domain occupies D61–L218. An INSIG-binding motif motif is present at residues Y75–F78. Residues Q79–K89 are Cytoplasmic-facing. K89 participates in a covalent cross-link: Glycyl lysine isopeptide (Lys-Gly) (interchain with G-Cter in ubiquitin). The chain crosses the membrane as a helical span at residues Y90–L114. Over D115–E123 the chain is Lumenal. The helical transmembrane segment at A124–S149 threads the bilayer. Topologically, residues Q150–R159 are cytoplasmic. Residues G160–V187 form a helical membrane-spanning segment. Residues R188–E191 are Lumenal-facing. The chain crosses the membrane as a helical span at residues I192 to L220. At E221–K248 the chain is on the cytoplasmic side. A Glycyl lysine isopeptide (Lys-Gly) (interchain with G-Cter in ubiquitin) cross-link involves residue K248. The helical transmembrane segment at P249–A275 threads the bilayer. Topologically, residues D276 to K314 are lumenal. N-linked (GlcNAc...) asparagine glycosylation is found at N281 and N296. A helical membrane pass occupies residues M315–F339. At E340–A888 the chain is on the cytoplasmic side. Catalysis depends on charge relay system residues E559, K691, and D767. The active-site Proton donor is H866. A Phosphoserine; by AMPK modification is found at S872.

Belongs to the HMG-CoA reductase family. As to quaternary structure, homotetramer. Homodimer. Interacts (via its SSD) with INSIG1; the interaction, accelerated by sterols, leads to the recruitment of HMGCR to AMFR/gp78 for its ubiquitination by the sterol-mediated ERAD pathway. Interacts with UBIAD1. Undergoes sterol-mediated ubiquitination and ER-associated degradation (ERAD). Accumulation of sterols in the endoplasmic reticulum (ER) membrane, triggers binding of the reductase to the ER membrane protein INSIG1 or INSIG2. The INSIG1 binding leads to the recruitment of the ubiquitin ligase, AMFR/gp78, RNF139 or RNF145, initiating ubiquitination of the reductase. The ubiquitinated reductase is then extracted from the ER membrane and delivered to cytosolic 26S proteosomes by a mechanism probably mediated by the ATPase Valosin-containing protein VCP/p97. The INSIG2-binding leads to the recruitment of the ubiquitin ligase RNF139, initiating ubiquitination of the reductase. Lys-248 is the main site of ubiquitination. Ubiquitination is enhanced by the presence of a geranylgeranylated protein. In terms of processing, N-glycosylated. Deglycosylated by NGLY1 on release from the endoplasmic reticulum (ER) in a sterol-mediated manner. Post-translationally, phosphorylated. Phosphorylation at Ser-872 reduces the catalytic activity.

It is found in the endoplasmic reticulum membrane. Its subcellular location is the peroxisome membrane. It catalyses the reaction (R)-mevalonate + 2 NADP(+) + CoA = (3S)-3-hydroxy-3-methylglutaryl-CoA + 2 NADPH + 2 H(+). It participates in metabolic intermediate biosynthesis; (R)-mevalonate biosynthesis; (R)-mevalonate from acetyl-CoA: step 3/3. With respect to regulation, regulated by a negative feedback mechanism through sterols and non-sterol metabolites derived from mevalonate. Phosphorylation at Ser-872 down-regulates the catalytic activity. In terms of biological role, catalyzes the conversion of (3S)-hydroxy-3-methylglutaryl-CoA (HMG-CoA) to mevalonic acid, the rate-limiting step in the synthesis of cholesterol and other isoprenoids, thus plays a critical role in cellular cholesterol homeostasis. This is 3-hydroxy-3-methylglutaryl-coenzyme A reductase (HMGCR) from Pongo abelii (Sumatran orangutan).